The primary structure comprises 227 residues: NAD(P)H-quinone oxidoreductase subunit K, chloroplastic (227 aa).

Residues Cys43, Cys44, Cys108, and Cys139 each coordinate [4Fe-4S] cluster.

It belongs to the complex I 20 kDa subunit family. NDH is composed of at least 16 different subunits, 5 of which are encoded in the nucleus. [4Fe-4S] cluster serves as cofactor.

It is found in the plastid. It localises to the chloroplast thylakoid membrane. It carries out the reaction a plastoquinone + NADH + (n+1) H(+)(in) = a plastoquinol + NAD(+) + n H(+)(out). It catalyses the reaction a plastoquinone + NADPH + (n+1) H(+)(in) = a plastoquinol + NADP(+) + n H(+)(out). In terms of biological role, NDH shuttles electrons from NAD(P)H:plastoquinone, via FMN and iron-sulfur (Fe-S) centers, to quinones in the photosynthetic chain and possibly in a chloroplast respiratory chain. The immediate electron acceptor for the enzyme in this species is believed to be plastoquinone. Couples the redox reaction to proton translocation, and thus conserves the redox energy in a proton gradient. The sequence is that of NAD(P)H-quinone oxidoreductase subunit K, chloroplastic from Pelargonium hortorum (Common geranium).